The primary structure comprises 553 residues: Glutamate--tRNA ligase (553 aa).

Residues 103-113 (PNPSGPLHIGH) carry the 'HIGH' region motif.

This sequence belongs to the class-I aminoacyl-tRNA synthetase family. Glutamate--tRNA ligase type 2 subfamily.

The protein resides in the cytoplasm. It carries out the reaction tRNA(Glu) + L-glutamate + ATP = L-glutamyl-tRNA(Glu) + AMP + diphosphate. Functionally, catalyzes the attachment of glutamate to tRNA(Glu) in a two-step reaction: glutamate is first activated by ATP to form Glu-AMP and then transferred to the acceptor end of tRNA(Glu). The protein is Glutamate--tRNA ligase of Methanothermobacter thermautotrophicus (strain ATCC 29096 / DSM 1053 / JCM 10044 / NBRC 100330 / Delta H) (Methanobacterium thermoautotrophicum).